The following is a 465-amino-acid chain: Cysteine--tRNA ligase (465 aa).

C27 contributes to the Zn(2+) binding site. The short motif at 29-39 (PTTYNYIHIGN) is the 'HIGH' region element. The Zn(2+) site is built by C207, H232, and E236. Residues 264-268 (KMSKS) carry the 'KMSKS' region motif. Residue K267 participates in ATP binding.

It belongs to the class-I aminoacyl-tRNA synthetase family. As to quaternary structure, monomer. It depends on Zn(2+) as a cofactor.

The protein resides in the cytoplasm. It carries out the reaction tRNA(Cys) + L-cysteine + ATP = L-cysteinyl-tRNA(Cys) + AMP + diphosphate. In Carboxydothermus hydrogenoformans (strain ATCC BAA-161 / DSM 6008 / Z-2901), this protein is Cysteine--tRNA ligase.